A 421-amino-acid chain; its full sequence is Enolase (421 aa).

Glutamine 165 serves as a coordination point for (2R)-2-phosphoglycerate. Catalysis depends on glutamate 207, which acts as the Proton donor. Mg(2+)-binding residues include aspartate 244, glutamate 285, and aspartate 312. 4 residues coordinate (2R)-2-phosphoglycerate: lysine 337, arginine 366, serine 367, and lysine 388. Lysine 337 serves as the catalytic Proton acceptor.

It belongs to the enolase family. Requires Mg(2+) as cofactor.

The protein resides in the cytoplasm. It is found in the secreted. Its subcellular location is the cell surface. It catalyses the reaction (2R)-2-phosphoglycerate = phosphoenolpyruvate + H2O. It participates in carbohydrate degradation; glycolysis; pyruvate from D-glyceraldehyde 3-phosphate: step 4/5. Functionally, catalyzes the reversible conversion of 2-phosphoglycerate (2-PG) into phosphoenolpyruvate (PEP). It is essential for the degradation of carbohydrates via glycolysis. This Ehrlichia chaffeensis (strain ATCC CRL-10679 / Arkansas) protein is Enolase.